We begin with the raw amino-acid sequence, 102 residues long: Envelope protein US9 (102 aa).

Topologically, residues 1–75 (MAGQNTMEGE…KIYHRKKFCY (75 aa)) are intravirion. The short motif at 14-15 (LL) is the Di-leucine internalization motif element. The interval 41–55 (EKCYYSDSENETADE) is acidic. 2 positions are modified to phosphoserine; by host CK2: Ser-46 and Ser-48. A helical; Signal-anchor for type II membrane protein membrane pass occupies residues 76–96 (ITLIIVFVFAMTGAAFALGYI). The Virion surface segment spans residues 97 to 102 (TSQFVG).

It belongs to the alphaherpesvirinae envelope protein US9 family. Phosphorylated on serines within the acidic cluster, possibly by host CK2. Phosphorylation determines whether endocytosed viral US9 traffics to the trans-Golgi network or recycles to the cell membrane.

It is found in the virion membrane. Its subcellular location is the host Golgi apparatus membrane. It localises to the host Golgi apparatus. The protein resides in the host trans-Golgi network. The protein localises to the host cell membrane. Its function is as follows. Essential for the anterograde spread of the infection throughout the host nervous system. Together with the gE/gI heterodimer, US9 is involved in the sorting and transport of viral structural components toward axon tips. The polypeptide is Envelope protein US9 (Varicella-zoster virus (strain Dumas) (HHV-3)).